The chain runs to 346 residues: [LysW]-lysine/[LysW]-ornithine hydrolase (346 aa).

His68 serves as a coordination point for Zn(2+). Asp70 is a catalytic residue. Asp92 contributes to the Zn(2+) binding site. Glu122 (proton acceptor) is an active-site residue. Zn(2+) contacts are provided by Glu123, Glu146, and His317.

It belongs to the peptidase M20A family. LysK subfamily. Requires Zn(2+) as cofactor. The cofactor is Co(2+).

Its subcellular location is the cytoplasm. The catalysed reaction is [amino-group carrier protein]-C-terminal-gamma-(L-lysyl)-L-glutamate + H2O = [amino-group carrier protein]-C-terminal-L-glutamate + L-lysine. It carries out the reaction [amino-group carrier protein]-C-terminal-gamma-(L-ornithyl)-L-glutamate + H2O = [amino-group carrier protein]-C-terminal-L-glutamate + L-ornithine. The protein operates within amino-acid biosynthesis; L-lysine biosynthesis via AAA pathway; L-lysine from L-alpha-aminoadipate (Thermus route): step 5/5. Its pathway is amino-acid biosynthesis; L-arginine biosynthesis. Functionally, catalyzes the release of L-lysine from [LysW]-gamma-L-lysine and the release of L-ornithine from [LysW]-L-ornithine. The chain is [LysW]-lysine/[LysW]-ornithine hydrolase from Saccharolobus solfataricus (strain ATCC 35092 / DSM 1617 / JCM 11322 / P2) (Sulfolobus solfataricus).